The chain runs to 510 residues: GMP synthase [glutamine-hydrolyzing] (510 aa).

The region spanning 5–195 (MIVVLDFGSQ…VFEVCGCRGD (191 aa)) is the Glutamine amidotransferase type-1 domain. The Nucleophile role is filled by cysteine 82. Catalysis depends on residues histidine 169 and glutamate 171. The region spanning 196 to 385 (WTMENFIDEQ…LGIPDEIVWR (190 aa)) is the GMPS ATP-PPase domain. 223–229 (SGGVDSS) lines the ATP pocket.

As to quaternary structure, homodimer.

It carries out the reaction XMP + L-glutamine + ATP + H2O = GMP + L-glutamate + AMP + diphosphate + 2 H(+). It participates in purine metabolism; GMP biosynthesis; GMP from XMP (L-Gln route): step 1/1. Functionally, catalyzes the synthesis of GMP from XMP. This chain is GMP synthase [glutamine-hydrolyzing], found in Geobacillus kaustophilus (strain HTA426).